Consider the following 474-residue polypeptide: PTS system N-acetylmuramic acid-specific EIIBC component (474 aa).

The region spanning 1 to 89 (MAKEISSELL…SELLGEAPVQ (89 aa)) is the PTS EIIB type-1 domain. Residues 1–123 (MAKEISSELL…LAKFATIFTP (123 aa)) are Cytoplasmic-facing. Cys-29 functions as the Phosphocysteine intermediate; for EIIB activity in the catalytic mechanism. Positions 115–474 (AKFATIFTPL…LFGCRNVNLD (360 aa)) constitute a PTS EIIC type-1 domain. A helical transmembrane segment spans residues 124 to 144 (LIPGFIAAGLLLGIATLIATV). Residues 145–157 (MHVPADAQGTLPD) are Periplasmic-facing. The helical transmembrane segment at 158–178 (ALNFMKVFSKGLFTFLVILVG) threads the bilayer. Over 179-180 (YN) the chain is Cytoplasmic. The helical transmembrane segment at 181–201 (AAQAFGGTGVNGAIIAALFLL) threads the bilayer. Residues 202 to 217 (GYNPAATTGYYAGFHD) are Periplasmic-facing. Residues 218–238 (FFGLPIDPRGNIIGVLIAAWA) form a helical membrane-spanning segment. Over 239 to 260 (CARIEGMVRRFMPDDLDMLLTS) the chain is Cytoplasmic. Residues 261–281 (LITLLITATLAYLIIMPLGGW) traverse the membrane as a helical segment. The Periplasmic portion of the chain corresponds to 282-301 (LFEGMSWLFMHLNSNPFGCA). The chain crosses the membrane as a helical span at residues 302–322 (VLAGLFLIAVVFGVHQGFIPV). Residues 323–334 (YLALMDSQGFNS) lie on the Cytoplasmic side of the membrane. A helical transmembrane segment spans residues 335-355 (LFPILSMAGAGQVGAALALYW). The Periplasmic segment spans residues 356 to 368 (RAQPHSALRSQVR). The helical transmembrane segment at 369–389 (GAIIPGLLGVGEPLIYGVTLP) threads the bilayer. Residues 390 to 393 (RMKP) lie on the Cytoplasmic side of the membrane. A helical membrane pass occupies residues 394–414 (FVTACLGGAAGGLFIGLIAWW). Over 415 to 440 (GLPMGLNSAFGPSGLVALPLMTSAQG) the chain is Periplasmic. A helical membrane pass occupies residues 441–461 (ILPAMAVYAGGILVAWVCGFI). Residues 462 to 474 (FTTLFGCRNVNLD) are Cytoplasmic-facing.

It localises to the cell inner membrane. It carries out the reaction N-acetyl-beta-D-muramate(out) + N(pros)-phospho-L-histidyl-[protein] = N-acetyl-beta-D-muramate 6-phosphate(in) + L-histidyl-[protein]. Its function is as follows. The phosphoenolpyruvate-dependent sugar phosphotransferase system (sugar PTS), a major carbohydrate active transport system, catalyzes the phosphorylation of incoming sugar substrates concomitantly with their translocation across the cell membrane. This system is involved in N-acetylmuramic acid (MurNAc) transport, yielding cytoplasmic MurNAc-6-P. Is responsible for growth on MurNAc as the sole source of carbon and energy. Is also able to take up anhydro-N-acetylmuramic acid (anhMurNAc), but cannot phosphorylate the carbon 6, probably because of the 1,6-anhydro ring. This Escherichia coli (strain K12) protein is PTS system N-acetylmuramic acid-specific EIIBC component (murP).